Here is a 261-residue protein sequence, read N- to C-terminus: Tryptophan synthase alpha chain (261 aa).

Residues glutamate 49 and aspartate 60 each act as proton acceptor in the active site.

It belongs to the TrpA family. As to quaternary structure, tetramer of two alpha and two beta chains.

The enzyme catalyses (1S,2R)-1-C-(indol-3-yl)glycerol 3-phosphate + L-serine = D-glyceraldehyde 3-phosphate + L-tryptophan + H2O. It functions in the pathway amino-acid biosynthesis; L-tryptophan biosynthesis; L-tryptophan from chorismate: step 5/5. Functionally, the alpha subunit is responsible for the aldol cleavage of indoleglycerol phosphate to indole and glyceraldehyde 3-phosphate. In Leifsonia xyli subsp. xyli (strain CTCB07), this protein is Tryptophan synthase alpha chain.